Here is a 235-residue protein sequence, read N- to C-terminus: Sugar fermentation stimulation protein homolog (235 aa).

Belongs to the SfsA family.

The protein is Sugar fermentation stimulation protein homolog of Aliivibrio fischeri (strain ATCC 700601 / ES114) (Vibrio fischeri).